Here is a 53-residue protein sequence, read N- to C-terminus: UPF0391 membrane protein ETA_06630 (53 aa).

The next 2 helical transmembrane spans lie at 4 to 24 and 27 to 47; these read WGII…GGLA and AAWA…ISLF.

This sequence belongs to the UPF0391 family.

The protein localises to the cell membrane. This chain is UPF0391 membrane protein ETA_06630, found in Erwinia tasmaniensis (strain DSM 17950 / CFBP 7177 / CIP 109463 / NCPPB 4357 / Et1/99).